Here is a 384-residue protein sequence, read N- to C-terminus: F-box A protein 224 (384 aa).

Residues 71 to 122 (PKSLSDFPIGVMYDVLGHVDPFERLVLRKVSRNLRDVVQKMRCELDALYVNK) enclose the F-box domain.

Belongs to the FTH family.

This is F-box A protein 224 (fbxa-224) from Caenorhabditis elegans.